Consider the following 440-residue polypeptide: Tripartite motif-containing protein 14 (440 aa).

Residues 17–59 form a B box-type zinc finger; sequence AYGWRCPEHSERPAELFCRRCGRCVCALCPVLGAHRGHPVGLA. Residues Cys22, His25, Cys45, and His51 each coordinate Zn(2+). One can recognise a B30.2/SPRY domain in the interval 247-440; it reads ALLKTSPSPE…EGPISIPRLP (194 aa).

Belongs to the TRIM/RBCC family. Interacts with MAVS. Interacts with WRNIP1 and PPP6C; these interactions positively regulate the RIG-I signaling pathway. Interacts with CGAS; this interaction stabilizes CGAS and promotes type I interferon production. Interacts with USP14; this interaction mediates the cleavage of 'Lys-48'-linked ubiquitination of CGAS. Interacts with TBK1. Interacts with SPI1. Interacts with KDM4D and USP14. In terms of processing, ubiquitinated. Undergoes 'Lys-63'-linked polyubiquitination; this modification allows IKBKG/NEMO recruitment to MAVS. Undergoes 'Lys-48'-linked polyubiquitination by RNF125; this modification mediates its degradation via the ubiquitin-proteasome pathway. In terms of tissue distribution, expressed with high level in spleen, thymus, liver and testis. Expressed with low level in the brain, kidney, and skeletal muscle. Expressed in various differentiation stages of B-lymphocytes.

It is found in the mitochondrion outer membrane. Its subcellular location is the cytoplasmic vesicle. The protein resides in the phagosome. Plays a role in the innate immune defense against viruses. Facilitates the type I IFN response by interacting with MAVS at the outer mitochondria membrane and thereby recruiting NF-kappa-B essential modulator IKBKG/NEMO to the MAVS signalosome, leading to the activation of both the IFN regulatory factor 3/IRF3 and NF-kappa-B pathways. Positively regulates the CGAS-induced type I interferon signaling pathway by stabilizing CGAS and inhibiting its autophagic degradation. Inhibits the transcriptional activity of SPI1 in a dose-dependent manner. Also inhibits OPTN-mediated selective autophagic degradation of KDM4D and thereby negatively regulates H3K9me2 and H3K9me3. Mechanistically, recruits USP14 to remove the 'Lys-63'-linked ubiquitination of KDM4D, preventing its recognition by OPTN and subsequent degradation. Its function is as follows. Plays an essential role in the innate immune defense against viruses and bacteria. Facilitates the type I IFN response by interacting with MAVS at the outer mitochondria membrane and thereby recruiting NF-kappa-B essential modulator IKBKG/NEMO to the MAVS signalosome, leading to the activation of both the IFN regulatory factor 3/IRF3 and NF-kappa-B pathways. Positively regulates the CGAS-induced type I interferon signaling pathway by stabilizing CGAS and inhibiting its autophagic degradation. Acts as a scaffold between TBK1 and STAT3 to promote phosphorylation of STAT3 and resolve interferon-stimulated gene (ISG) expression. Inhibits the transcriptional activity of SPI1 in a dose-dependent manner. The polypeptide is Tripartite motif-containing protein 14 (Trim14) (Mus musculus (Mouse)).